Consider the following 476-residue polypeptide: Bifunctional protein HldE (476 aa).

The interval 1–319 (MKLTLPDYDQ…EAIYGSQDSG (319 aa)) is ribokinase. 195–198 (NLSE) is an ATP binding site. Residue Asp-264 is part of the active site. The cytidylyltransferase stretch occupies residues 344–476 (MTNGCFDILH…IIEAIRGGKG (133 aa)).

This sequence in the N-terminal section; belongs to the carbohydrate kinase PfkB family. It in the C-terminal section; belongs to the cytidylyltransferase family. Homodimer.

The enzyme catalyses D-glycero-beta-D-manno-heptose 7-phosphate + ATP = D-glycero-beta-D-manno-heptose 1,7-bisphosphate + ADP + H(+). It catalyses the reaction D-glycero-beta-D-manno-heptose 1-phosphate + ATP + H(+) = ADP-D-glycero-beta-D-manno-heptose + diphosphate. It functions in the pathway nucleotide-sugar biosynthesis; ADP-L-glycero-beta-D-manno-heptose biosynthesis; ADP-L-glycero-beta-D-manno-heptose from D-glycero-beta-D-manno-heptose 7-phosphate: step 1/4. Its pathway is nucleotide-sugar biosynthesis; ADP-L-glycero-beta-D-manno-heptose biosynthesis; ADP-L-glycero-beta-D-manno-heptose from D-glycero-beta-D-manno-heptose 7-phosphate: step 3/4. Functionally, catalyzes the phosphorylation of D-glycero-D-manno-heptose 7-phosphate at the C-1 position to selectively form D-glycero-beta-D-manno-heptose-1,7-bisphosphate. In terms of biological role, catalyzes the ADP transfer from ATP to D-glycero-beta-D-manno-heptose 1-phosphate, yielding ADP-D-glycero-beta-D-manno-heptose. This Photobacterium profundum (strain SS9) protein is Bifunctional protein HldE.